The sequence spans 425 residues: L-lysine N6-monooxygenase (425 aa).

Isoleucine 8–proline 14 lines the FAD pocket.

This sequence belongs to the lysine N(6)-hydroxylase/L-ornithine N(5)-oxygenase family. It depends on FAD as a cofactor.

It localises to the cytoplasm. Its subcellular location is the cell membrane. The enzyme catalyses L-lysine + NADPH + O2 = N(6)-hydroxy-L-lysine + NADP(+) + H2O. It participates in siderophore biosynthesis; aerobactin biosynthesis. Flavoprotein monooxygenase required for N-hydroxylation of lysine. Involved in the biosynthesis of the siderophore aerobactin which is a chelator that mediates the high-affinity iron transport systems induced by the organism under iron-stressed conditions. The sequence is that of L-lysine N6-monooxygenase from Escherichia coli.